The primary structure comprises 535 residues: CTP synthase (535 aa).

Positions 300-535 (RIGIVGKYAP…LVSASYERSK (236 aa)) constitute a Glutamine amidotransferase type-1 domain. Catalysis depends on for GATase activity residues Cys385, His509, and Glu511.

It belongs to the CTP synthase family.

The enzyme catalyses UTP + L-glutamine + ATP + H2O = CTP + L-glutamate + ADP + phosphate + 2 H(+). Its pathway is pyrimidine metabolism; CTP biosynthesis via de novo pathway; CTP from UDP: step 2/2. In terms of biological role, catalyzes the ATP-dependent amination of UTP to CTP with either L-glutamine or ammonia as the source of nitrogen. The polypeptide is CTP synthase (Encephalitozoon cuniculi (strain GB-M1) (Microsporidian parasite)).